The primary structure comprises 241 residues: ATP synthase subunit a (241 aa).

Helical transmembrane passes span 21–41 (LASI…AIAC), 84–104 (VTLI…AIVI), 116–136 (DATV…YYGI), 183–203 (ILIG…WIIG), and 207–227 (LIAW…IFIM).

The protein belongs to the ATPase A chain family. F-type ATPases have 2 components, CF(1) - the catalytic core - and CF(0) - the membrane proton channel. CF(1) has five subunits: alpha(3), beta(3), gamma(1), delta(1), epsilon(1). CF(0) has three main subunits: a(1), b(2) and c(9-12). The alpha and beta chains form an alternating ring which encloses part of the gamma chain. CF(1) is attached to CF(0) by a central stalk formed by the gamma and epsilon chains, while a peripheral stalk is formed by the delta and b chains.

The protein localises to the cell membrane. In terms of biological role, key component of the proton channel; it plays a direct role in the translocation of protons across the membrane. The polypeptide is ATP synthase subunit a (Staphylococcus carnosus (strain TM300)).